The chain runs to 510 residues: Flagellin A (510 aa).

This sequence belongs to the bacterial flagellin family. As to quaternary structure, heteromer of FlaA and FlaB. FlaB is located proximal to the hook while the remainder of the filament is composed of the predominant FlaA.

The protein localises to the secreted. The protein resides in the bacterial flagellum. Flagellin is the subunit protein which polymerizes to form the filaments of bacterial flagella. Important for motility and virulence. The chain is Flagellin A (flaA) from Helicobacter pylori (strain ATCC 700392 / 26695) (Campylobacter pylori).